Consider the following 662-residue polypeptide: Transketolase (662 aa).

H28 is a substrate binding site. Thiamine diphosphate is bound by residues H68 and 115–117 (GPL). Residue D156 participates in Mg(2+) binding. Residues G157 and N186 each contribute to the thiamine diphosphate site. Mg(2+) is bound by residues N186 and I188. 3 residues coordinate substrate: H261, R356, and S383. Thiamine diphosphate is bound at residue H261. E410 functions as the Proton donor in the catalytic mechanism. Residue F436 participates in thiamine diphosphate binding. H460, D468, and R519 together coordinate substrate.

Belongs to the transketolase family. In terms of assembly, homodimer. Mg(2+) is required as a cofactor. It depends on Ca(2+) as a cofactor. The cofactor is Mn(2+). Requires Co(2+) as cofactor. Thiamine diphosphate serves as cofactor.

It carries out the reaction D-sedoheptulose 7-phosphate + D-glyceraldehyde 3-phosphate = aldehydo-D-ribose 5-phosphate + D-xylulose 5-phosphate. The protein operates within carbohydrate biosynthesis; Calvin cycle. It participates in carbohydrate degradation; pentose phosphate pathway. Catalyzes the transfer of a two-carbon ketol group from a ketose donor to an aldose acceptor, via a covalent intermediate with the cofactor thiamine pyrophosphate. This chain is Transketolase (tkt), found in Staphylococcus aureus (strain COL).